Consider the following 387-residue polypeptide: MEDDAPVIYGLEFQARALTPQTAETDAIRFLVGTQSLKYDNQIHIIDFDDENNIINKNVLLHQVGEIWHISASPADKGVLATCYSKTSDSKVMTCAAVWRMPKELESGSHESPDDSSSNAQTLELLCHLDNTAHGNMAGVLWEPMGDGKKLISLADNHLLLWDLQESSSKAVLSNSAALEGKGQLKFTSGRWSPHHNCTQVATANDTAIRGWDIRTMSQIYCIESAHGQLVRDLDFNPNKQYYLASCGDDCKVKFWDTRNVSDPVKTLEEHSHWVWNVRYNHSHDQLVLTASSDSRVILSNMVSISSEPFGHLVDDEELSDQEDQHQEDKIKEPLQDSIIATYEEHEDSVYAVEWSSADPWLFASLSYDGRLVINRVPRALKYHILL.

WD repeat units lie at residues 132–172 (TAHG…SKAV), 182–222 (KGQL…QIYC), 226–266 (AHGQ…DPVK), 270–310 (EHSH…SEPF), and 345–385 (EHED…KYHI).

This sequence belongs to the WD repeat EIPR1 family.

This chain is EARP-interacting protein homolog, found in Gekko japonicus (Schlegel's Japanese gecko).